A 221-amino-acid chain; its full sequence is MVRGKTEMKRIENATSRQVTFSKRRNGLLKKAFELSVLCDAEVALIIFSPRGKLYEFSSSSSIPKTVERYQKRIQDLGSNHKRNDNSQQSKDETYGLARKIEHLEISTRKMMGEGLDASSIEELQQLENQLDRSLMKIRAKKYQLLREETEKLKEKERNLIAENKMLMEKCEMQGRGIIGRISSSSSTSELDIDDNEMEVVTDLFIGPPETRHFKKFPPSN.

The 55-residue stretch at 3–57 (RGKTEMKRIENATSRQVTFSKRRNGLLKKAFELSVLCDAEVALIIFSPRGKLYEF) folds into the MADS-box domain. The region spanning 87 to 177 (SQQSKDETYG…MEKCEMQGRG (91 aa)) is the K-box domain.

Interacts with AGL16. As to expression, preferentially expressed in roots. Expressed in lateral root cap, root epidermis, root endodermis, columella of the root meristematic region, the vascular cylinder in differentiated zones of the primary root and in emerged lateral root primordia. Expressed in pollen.

It is found in the nucleus. Its function is as follows. Transcriptional activator that regulates root development by controlling meristem size and patterning of the root apical meristem. Regulates auxin transport and gradients in the root meristematic cells via direct regulation of the auxin efflux carrier PIN1 and PIN4 gene expression. Binds specifically to the CArG-box DNA sequences in the promoter regions of PIN1 and PIN4 genes. Involved in the regulation of shoot apical meristem (SAM) cell identities and transitions. Promotes flowering transition and participates in flower meristem maintenance and determinacy. Positively regulates TFL1 and WUS expression. Binds directly to the TFL1 regulatory sequences. This Arabidopsis thaliana (Mouse-ear cress) protein is Agamous-like MADS-box protein AGL14.